The sequence spans 701 residues: Meprin A subunit beta (701 aa).

A signal peptide spans 1-22; sequence MDLWNLSWFLFLDALLVISGLA. Positions 23–61 are excised as a propeptide; that stretch reads TPENFDVDGGMDQDIFDINEGLGLDLFEGDIRLDRAQIR. Over 23-652 the chain is Extracellular; that stretch reads TPENFDVDGG…CEKRGSTRDT (630 aa). Residues 62-256 form the Peptidase M12A domain; sequence NSIIGEKYRW…LKLNQLYNCS (195 aa). 3 disulfides stabilise this stretch: C103/C255, C124/C144, and C265/C427. A Zn(2+)-binding site is contributed by H152. Residue E153 is part of the active site. Positions 156 and 162 each coordinate Zn(2+). N-linked (GlcNAc...) asparagine glycans are attached at residues N218, N254, N370, N421, N436, N445, N547, and N592. Positions 260-429 constitute an MAM domain; that stretch reads SFMDSCSFEL…INLSETRCPH (170 aa). An MATH domain is found at 430–585; that stretch reads HIWHIRNFTQ…GDDVYILLTV (156 aa). A glycan (O-linked (GalNAc...) serine) is linked at S593. 2 O-linked (GalNAc...) threonine glycosylation sites follow: T594 and T599. Residues 595-607 are required for proteolytic processing; that stretch reads QIQLTPAPSVQDL. Residue S603 is glycosylated (O-linked (GalNAc...) serine). An EGF-like domain is found at 604-644; the sequence is VQDLCSKTTCKNDGVCTVRDGKAECRCQSGEDWWYMGERCE. Cystine bridges form between C608/C619, C613/C628, and C630/C643. The chain crosses the membrane as a helical span at residues 653–673; it reads IVIAVSSTVAVFALMLIITLV. Residues 674 to 701 lie on the Cytoplasmic side of the membrane; that stretch reads SVYCTRKKYRERMSSNRPNLTPQNQHAF. A Phosphothreonine modification is found at T694.

Homotetramer consisting of disulfide-linked beta subunits, or heterotetramer of two alpha and two beta subunits formed by non-covalent association of two disulfide-linked heterodimers. Interacts with MBL2 through its carbohydrate moiety. This interaction may inhibit its catalytic activity. Interacts with TSPAN8. It depends on Zn(2+) as a cofactor. Phosphorylated by PKC at multiple sites of its cytoplasmic part. Phosphorylation dcreases activity at the cell surface, leading to diminished substrate cleavage. In terms of processing, N-glycosylated; contains high mannose and/or complex biantennary structures. Post-translationally, O-glycosylation protect the C-terminal region from proteolytic cleavage and diminish secretion, this seems to be specific to human. Proteolytically activated by trypsin in the intestinal lumen and kallikrein-related peptidases in other tissues. The major site of expression is the brush border membrane of small intestinal and kidney epithelial cells.

The protein resides in the cell membrane. The protein localises to the secreted. The catalysed reaction is Hydrolysis of proteins, including azocasein, and peptides. Hydrolysis of 5-His-|-Leu-6, 6-Leu-|-Cys-7, 14-Ala-|-Leu-15 and 19-Cys-|-Gly-20 bonds in insulin B chain.. Its activity is regulated as follows. Strongly inhibited by fetuin-A/AHSG. Membrane metallopeptidase that sheds many membrane-bound proteins. Exhibits a strong preference for acidic amino acids at the P1' position. Known substrates include: FGF19, VGFA, IL1B, IL18, procollagen I and III, E-cadherin, KLK7, gastrin, ADAM10, tenascin-C. The presence of several pro-inflammatory cytokine among substrates implicate MEP1B in inflammation. It is also involved in tissue remodeling due to its capability to degrade extracellular matrix components. Also cleaves the amyloid precursor protein/APP, thereby releasing neurotoxic amyloid beta peptides. This Homo sapiens (Human) protein is Meprin A subunit beta (MEP1B).